We begin with the raw amino-acid sequence, 430 residues long: DNA polymerase IV 1 (430 aa).

The 181-residue stretch at 45 to 225 (LAHIDCDAFY…KPVTLIWGVG (181 aa)) folds into the UmuC domain. Residues D49 and D142 each contribute to the Mg(2+) site. The active site involves E143.

The protein belongs to the DNA polymerase type-Y family. In terms of assembly, monomer. The cofactor is Mg(2+).

It is found in the cytoplasm. It carries out the reaction DNA(n) + a 2'-deoxyribonucleoside 5'-triphosphate = DNA(n+1) + diphosphate. Functionally, poorly processive, error-prone DNA polymerase involved in untargeted mutagenesis. Copies undamaged DNA at stalled replication forks, which arise in vivo from mismatched or misaligned primer ends. These misaligned primers can be extended by PolIV. Exhibits no 3'-5' exonuclease (proofreading) activity. May be involved in translesional synthesis, in conjunction with the beta clamp from PolIII. In Rhizobium meliloti (strain 1021) (Ensifer meliloti), this protein is DNA polymerase IV 1 (dinB1).